Consider the following 211-residue polypeptide: Redox-sensing transcriptional repressor Rex (211 aa).

Residues 18-57 (LYYRFIESLHAAGKQRVSSTELSQAVKVDSATIRRDFSYF) constitute a DNA-binding region (H-T-H motif). 92–97 (GVGNLG) contacts NAD(+).

Belongs to the transcriptional regulatory Rex family. Homodimer.

The protein localises to the cytoplasm. Its function is as follows. Modulates transcription in response to changes in cellular NADH/NAD(+) redox state. This chain is Redox-sensing transcriptional repressor Rex, found in Shouchella clausii (strain KSM-K16) (Alkalihalobacillus clausii).